The sequence spans 283 residues: Energy-coupling factor transporter ATP-binding protein EcfA1 (283 aa).

One can recognise an ABC transporter domain in the interval 7–244 (VEFRHVSFTY…PELLQEIGLD (238 aa)). 41 to 48 (GHNGSGKS) contacts ATP.

It belongs to the ABC transporter superfamily. Energy-coupling factor EcfA family. In terms of assembly, forms a stable energy-coupling factor (ECF) transporter complex composed of 2 membrane-embedded substrate-binding proteins (S component), 2 ATP-binding proteins (A component) and 2 transmembrane proteins (T component).

Its subcellular location is the cell membrane. Functionally, ATP-binding (A) component of a common energy-coupling factor (ECF) ABC-transporter complex. Unlike classic ABC transporters this ECF transporter provides the energy necessary to transport a number of different substrates. The polypeptide is Energy-coupling factor transporter ATP-binding protein EcfA1 (Lactobacillus acidophilus (strain ATCC 700396 / NCK56 / N2 / NCFM)).